A 103-amino-acid polypeptide reads, in one-letter code: Small integral membrane protein 32 (103 aa).

A helical membrane pass occupies residues 55–75; sequence YLLLFFLLLLSVALVVLFIGC.

The protein resides in the membrane. This chain is Small integral membrane protein 32, found in Homo sapiens (Human).